A 283-amino-acid polypeptide reads, in one-letter code: Lolitrem B biosynthesis cluster protein S (283 aa).

A signal peptide spans 1–27; the sequence is MSRSDWIFISLQGFFCLAGVIWKSREG. A run of 5 helical transmembrane segments spans residues 73–93, 112–132, 157–177, 219–239, and 250–270; these read WFWL…LIIL, LGYL…SLWI, IFWC…VATL, MTGT…ALEA, and VRMF…DVLL.

This sequence belongs to the ltmS family.

The protein resides in the membrane. Its function is as follows. Part of the gene cluster that mediates the biosynthesis of lolitrems, indole-diterpene mycotoxins that are potent tremorgens in mammals, and are synthesized by clavicipitaceous fungal endophytes in association with their grass hosts. The geranylgeranyl diphosphate (GGPP) synthase ltmG is proposed to catalyze the first step in lolitrem biosynthesis. LtmG catalyzes a series of iterative condensations of isopentenyl diphosphate (IPP) with dimethylallyl diphosphate (DMAPP), geranyl diphosphate (GPP), and farnesyl diphosphate (FPP), to form GGPP. GGPP then condenses with indole-3-glycerol phosphate to form 3-geranylgeranylindole, an acyclic intermediate, to be incorporated into paxilline. Either ltmG or ltmC could be responsible for this step, as both are putative prenyl transferases. The FAD-dependent monooxygenase ltmM then catalyzes the epoxidation of the two terminal alkenes of the geranylgeranyl moiety, which is subsequently cyclized by ltmB, to paspaline. The cytochrome P450 monooxygenases ltmQ and ltmP can sequentially oxidize paspaline to terpendole E and terpendole F. Alternatively, ltmP converts paspaline to an intermediate which is oxidized by ltmQ to terpendole F. LtmF, ltmK, ltmE and ltmJ appear to be unique to the epichloe endophytes. The prenyltransferase ltmF is involved in the 27-hydroxyl-O-prenylation. The cytochrome P450 monooxygenase ltmK is required for the oxidative acetal ring formation. The multi-functional prenyltransferase ltmE is required for C20- and C21-prenylations of the indole ring of paspalanes and acts together with the cytochrome P450 monooxygenase ltmJ to yield lolitremanes by multiple oxidations and ring closures. The stereoisomer pairs of lolitriol and lolitrem N or lolitrem B and lolitrem F may be attributed to variations in the way in which ring closure can occur under the action of ltmJ. While the major product of this pathway is lolitrem B, the prenyl transferases and cytochrome P450 monooxygenases identified in this pathway have a remarkable versatility in their regio- and stereo-specificities to generate a diverse range of metabolites that are products of a metabolic grid rather than a linear pathway. This is Lolitrem B biosynthesis cluster protein S from Epichloe festucae (strain Fl1).